The primary structure comprises 112 residues: Large ribosomal subunit protein bL17 (112 aa).

It belongs to the bacterial ribosomal protein bL17 family. Part of the 50S ribosomal subunit. Contacts protein L32.

This Carboxydothermus hydrogenoformans (strain ATCC BAA-161 / DSM 6008 / Z-2901) protein is Large ribosomal subunit protein bL17.